A 287-amino-acid polypeptide reads, in one-letter code: Large ribosomal subunit protein uL2 (287 aa).

Residues 221-287 form a disordered region; it reads RGSVMNPCDH…SKRSRGGRDS (67 aa). A compositionally biased stretch (basic residues) spans 258 to 287; the sequence is KTRKRNKPSNRFVLRKRRRTSKRSRGGRDS.

This sequence belongs to the universal ribosomal protein uL2 family. As to quaternary structure, part of the 50S ribosomal subunit. Forms a bridge to the 30S subunit in the 70S ribosome.

Its function is as follows. One of the primary rRNA binding proteins. Required for association of the 30S and 50S subunits to form the 70S ribosome, for tRNA binding and peptide bond formation. It has been suggested to have peptidyltransferase activity; this is somewhat controversial. Makes several contacts with the 16S rRNA in the 70S ribosome. This Prochlorococcus marinus (strain MIT 9313) protein is Large ribosomal subunit protein uL2.